The chain runs to 246 residues: Probable site-specific recombinase in afa region (246 aa).

One can recognise a Tyr recombinase domain in the interval A40–A225. Catalysis depends on residues R75, K102, H177, R180, and H203. Y212 acts as the O-(3'-phospho-DNA)-tyrosine intermediate in catalysis.

Belongs to the 'phage' integrase family.

In Escherichia coli, this protein is Probable site-specific recombinase in afa region (int).